A 380-amino-acid polypeptide reads, in one-letter code: Putative 8-amino-7-oxononanoate synthase (380 aa).

R18 contributes to the substrate binding site. Position 106–107 (106–107) interacts with pyridoxal 5'-phosphate; it reads GY. Residue H131 coordinates substrate. Residues S179, 205–208, and 236–239 each bind pyridoxal 5'-phosphate; these read DEAH and TFGK. The residue at position 239 (K239) is an N6-(pyridoxal phosphate)lysine. T352 provides a ligand contact to substrate.

This sequence belongs to the class-II pyridoxal-phosphate-dependent aminotransferase family. BioF subfamily. In terms of assembly, homodimer. The cofactor is pyridoxal 5'-phosphate.

The catalysed reaction is 6-carboxyhexanoyl-[ACP] + L-alanine + H(+) = (8S)-8-amino-7-oxononanoate + holo-[ACP] + CO2. The protein operates within cofactor biosynthesis; biotin biosynthesis. Its function is as follows. Catalyzes the decarboxylative condensation of pimeloyl-[acyl-carrier protein] and L-alanine to produce 8-amino-7-oxononanoate (AON), [acyl-carrier protein], and carbon dioxide. The sequence is that of Putative 8-amino-7-oxononanoate synthase (bioF) from Haemophilus influenzae (strain ATCC 51907 / DSM 11121 / KW20 / Rd).